The following is a 147-amino-acid chain: MNNPDDLIVITRFLRQQHVLTLCAGSGMDMWCANCFYVFDEAKMALYLMTEKHTRHGELMQINPQVVGTIATQPRTVALIKGIQYRGEITELKDDAELIARQHYCRRFPVAKVVSAPLWQLNLLEIKMTNNTLDFGKKLYWSRLESQ.

The protein belongs to the UPF0306 family.

In Yersinia enterocolitica serotype O:8 / biotype 1B (strain NCTC 13174 / 8081), this protein is UPF0306 protein YE0465.